Here is a 195-residue protein sequence, read N- to C-terminus: Ribosomal RNA small subunit methyltransferase G (195 aa).

Residues Gly-60, Leu-65, 114–115, and Arg-128 each bind S-adenosyl-L-methionine; that span reads IE.

It belongs to the methyltransferase superfamily. RNA methyltransferase RsmG family.

Its subcellular location is the cytoplasm. It carries out the reaction guanosine(527) in 16S rRNA + S-adenosyl-L-methionine = N(7)-methylguanosine(527) in 16S rRNA + S-adenosyl-L-homocysteine. Functionally, specifically methylates the N7 position of guanine in position 527 of 16S rRNA. The chain is Ribosomal RNA small subunit methyltransferase G from Dinoroseobacter shibae (strain DSM 16493 / NCIMB 14021 / DFL 12).